The chain runs to 616 residues: Dihydroxy-acid dehydratase (616 aa).

Mg(2+) is bound at residue Asp81. Position 122 (Cys122) interacts with [2Fe-2S] cluster. The Mg(2+) site is built by Asp123 and Lys124. N6-carboxylysine is present on Lys124. A [2Fe-2S] cluster-binding site is contributed by Cys195. Position 491 (Glu491) interacts with Mg(2+). Catalysis depends on Ser517, which acts as the Proton acceptor.

Belongs to the IlvD/Edd family. In terms of assembly, homodimer. The cofactor is [2Fe-2S] cluster. Mg(2+) is required as a cofactor.

The catalysed reaction is (2R)-2,3-dihydroxy-3-methylbutanoate = 3-methyl-2-oxobutanoate + H2O. It carries out the reaction (2R,3R)-2,3-dihydroxy-3-methylpentanoate = (S)-3-methyl-2-oxopentanoate + H2O. Its pathway is amino-acid biosynthesis; L-isoleucine biosynthesis; L-isoleucine from 2-oxobutanoate: step 3/4. The protein operates within amino-acid biosynthesis; L-valine biosynthesis; L-valine from pyruvate: step 3/4. Functions in the biosynthesis of branched-chain amino acids. Catalyzes the dehydration of (2R,3R)-2,3-dihydroxy-3-methylpentanoate (2,3-dihydroxy-3-methylvalerate) into 2-oxo-3-methylpentanoate (2-oxo-3-methylvalerate) and of (2R)-2,3-dihydroxy-3-methylbutanoate (2,3-dihydroxyisovalerate) into 2-oxo-3-methylbutanoate (2-oxoisovalerate), the penultimate precursor to L-isoleucine and L-valine, respectively. The polypeptide is Dihydroxy-acid dehydratase (Salmonella gallinarum (strain 287/91 / NCTC 13346)).